Here is a 194-residue protein sequence, read N- to C-terminus: Large ribosomal subunit protein eL15 (194 aa).

Residues 164-194 form a disordered region; sequence SAGKKGRGLRNKGIGAEKVRPSIRAHGRRGK. Residues 184-194 are compositionally biased toward basic residues; that stretch reads PSIRAHGRRGK.

Belongs to the eukaryotic ribosomal protein eL15 family.

The sequence is that of Large ribosomal subunit protein eL15 (rpl15e) from Methanocaldococcus jannaschii (strain ATCC 43067 / DSM 2661 / JAL-1 / JCM 10045 / NBRC 100440) (Methanococcus jannaschii).